Reading from the N-terminus, the 177-residue chain is Bifunctional protein PyrR (177 aa).

Positions 99 to 111 (LVLIDDVIYKGRT) match the PRPP-binding motif.

This sequence belongs to the purine/pyrimidine phosphoribosyltransferase family. PyrR subfamily.

It catalyses the reaction UMP + diphosphate = 5-phospho-alpha-D-ribose 1-diphosphate + uracil. Its function is as follows. Regulates the transcription of the pyrimidine nucleotide (pyr) operon in response to exogenous pyrimidines. Functionally, also displays a weak uracil phosphoribosyltransferase activity which is not physiologically significant. The protein is Bifunctional protein PyrR of Picosynechococcus sp. (strain ATCC 27264 / PCC 7002 / PR-6) (Agmenellum quadruplicatum).